The chain runs to 190 residues: Adenine phosphoribosyltransferase (190 aa).

This sequence belongs to the purine/pyrimidine phosphoribosyltransferase family. As to quaternary structure, homodimer.

The protein resides in the cytoplasm. It catalyses the reaction AMP + diphosphate = 5-phospho-alpha-D-ribose 1-diphosphate + adenine. Its pathway is purine metabolism; AMP biosynthesis via salvage pathway; AMP from adenine: step 1/1. In terms of biological role, catalyzes a salvage reaction resulting in the formation of AMP, that is energically less costly than de novo synthesis. The sequence is that of Adenine phosphoribosyltransferase from Cupriavidus necator (strain ATCC 17699 / DSM 428 / KCTC 22496 / NCIMB 10442 / H16 / Stanier 337) (Ralstonia eutropha).